The primary structure comprises 374 residues: Alginate lyase (374 aa).

Positions 1 to 26 are cleaved as a signal peptide; the sequence is MRNPKLKNLLAPTLLSLAMFAGATQA. Residues 67 to 68, 140 to 141, and Y258 each bind substrate; these read SK and HT.

This sequence belongs to the polysaccharide lyase 5 family.

It localises to the periplasm. The enzyme catalyses Eliminative cleavage of alginate to give oligosaccharides with 4-deoxy-alpha-L-erythro-hex-4-enuronosyl groups at their non-reducing ends and beta-D-mannuronate at their reducing end.. Its function is as follows. Catalyzes the depolymerization of alginate by cleaving the beta-1,4 glycosidic bond between two adjacent sugar residues via a beta-elimination mechanism. May serve to degrade mislocalized alginate that is trapped in the periplasmic space. This Cobetia marina (Deleya marina) protein is Alginate lyase.